A 171-amino-acid polypeptide reads, in one-letter code: MLHTRTIALLLVGLVVLVNAQTFQYSRGWTNGKRSPLSSSSSSPSSSAAMEPLTANQLLASALSSGGLNSLKPSEKALLRRFLRNPCDLRVASLLAAAHPTKELFPLAGNSFDSAESAGAAFVLPPFLMDPDESNGGIGGSNLANGRSMEDELRFKRGTATGFSDHRQKIA.

Residues 1–20 form the signal peptide; sequence MLHTRTIALLLVGLVVLVNA. At Gln21 the chain carries Pyrrolidone carboxylic acid. Asn31 carries the asparagine amide modification. Positions 82 to 171 are excised as a propeptide; it reads FLRNPCDLRV…GFSDHRQKIA (90 aa).

Belongs to the corazonin family.

It is found in the secreted. Cardioactive peptide. Corazonin is probably involved in the physiological regulation of the heart beat. The sequence is that of Pro-corazonin from Anopheles gambiae (African malaria mosquito).